A 414-amino-acid polypeptide reads, in one-letter code: Voltage-gated ClC-type chloride channel ClcB (414 aa).

The next 11 membrane-spanning stretches (helical) occupy residues 5–25 (LVIS…FHQA), 54–74 (ALTP…YQRY), 116–136 (SAIG…SVFA), 147–167 (LWVA…PLAG), 169–189 (LFIA…PVVI), 220–240 (VQYF…PLFL), 255–275 (LLPP…SLIF), 292–312 (TPPG…AVLA), 327–347 (LFVG…WPVL), 353–373 (LLMA…APIM), and 381–401 (MTGE…ATTI).

It belongs to the chloride channel (TC 2.A.49) family. ClcB subfamily.

The protein localises to the cell inner membrane. Its function is as follows. Probably acts as an electrical shunt for an outwardly-directed proton pump that is linked to amino acid decarboxylation, as part of the extreme acid resistance (XAR) response. The sequence is that of Voltage-gated ClC-type chloride channel ClcB from Yersinia pseudotuberculosis serotype O:1b (strain IP 31758).